The following is a 212-amino-acid chain: Protein-L-isoaspartate O-methyltransferase (212 aa).

Ser56 is a catalytic residue.

It belongs to the methyltransferase superfamily. L-isoaspartyl/D-aspartyl protein methyltransferase family.

It localises to the cytoplasm. The enzyme catalyses [protein]-L-isoaspartate + S-adenosyl-L-methionine = [protein]-L-isoaspartate alpha-methyl ester + S-adenosyl-L-homocysteine. In terms of biological role, catalyzes the methyl esterification of L-isoaspartyl residues in peptides and proteins that result from spontaneous decomposition of normal L-aspartyl and L-asparaginyl residues. It plays a role in the repair and/or degradation of damaged proteins. This Myxococcus xanthus (strain DK1622) protein is Protein-L-isoaspartate O-methyltransferase.